The chain runs to 627 residues: Protein fem-1 homolog B (627 aa).

6 ANK repeats span residues 45–74, 87–116, 120–149, 153–182, 186–215, and 218–248; these read QRST…VQTQ, DGAT…NVNH, TNST…NISI, YDNT…DPNA, CGAT…AMMV, and HGMT…NRRS. One copy of the TPR repeat lies at 344–377; that stretch reads SHPIIYRGAVYADNMEFEQCIKLWLHALHLRQKG. 2 ANK repeats span residues 483-527 and 531-568; these read DGST…DVNA and EGNS…HTDM.

Belongs to the fem-1 family. Component of a CRL2 E3 ubiquitin-protein ligase complex, also named ECS (Elongin BC-CUL2/5-SOCS-box protein) complex.

Its subcellular location is the cytoplasm. The protein localises to the nucleus. The protein operates within protein modification; protein ubiquitination. Its function is as follows. Substrate-recognition component of a Cul2-RING (CRL2) E3 ubiquitin-protein ligase complex of the DesCEND (destruction via C-end degrons) pathway, which recognizes a C-degron located at the extreme C terminus of target proteins, leading to their ubiquitination and degradation. The C-degron recognized by the DesCEND pathway is usually a motif of less than ten residues and can be present in full-length proteins, truncated proteins or proteolytically cleaved forms. The CRL2(FEM1B) complex specifically recognizes proteins ending with -Gly-Leu-Asp-Arg, leading to their ubiquitination and degradation. In Gallus gallus (Chicken), this protein is Protein fem-1 homolog B.